Here is a 303-residue protein sequence, read N- to C-terminus: NmrA-like family domain-containing oxidoreductase FVEG_08287 (303 aa).

NADP(+) contacts are provided by residues 8–13, 8–14, 36–39, Arg-37, 56–57, 77–79, and 159–162; these read LGAGEL, LGAGELG, LRPS, QG, IFR, and FMSF.

Belongs to the NmrA-type oxidoreductase family.

Its function is as follows. NmrA-like family domain-containing oxidoreductase; part of the Fusarium detoxification of benzoxazolinone cluster 1 (FDB1) involved in the degradation of benzoxazolinones produced by the host plant. Maize, wheat, and rye produce the 2 benzoxazinone phytoanticipins 2,4-dihy-droxy-7-methoxy-1,4-benzoxazin-3-one (DIMBOA) and 2,4-dihydroxy-1,4-benzoxazin-3-one (DIBOA) that, due to their inherent instability once released, spontaneously degrade to the more stable corresponding benzoxazolinones, 6-methoxy-2-benzoxazolinone (MBOA) and 2-benzoxazolinone (BOA), respectively. The first step in the detoxification of benzoxazolinones involves the hydrolysis of the cyclic ester bond of benzoxazolinones by the FDB1 cluster gamma-lactamase MBL1 to aminophenols. MBL1 is able to convert BOA into 2-aminophenol (2-AP), as well as MBOA into 5-methoxy-2-aminophenol (2-AMP). The FDB2 cluster N-malonyltransferase FDB2/NAT1 then metabolizes aminophenols via N-malonylation to non-toxic malonamic acids. FDB2/NAT1 converts 2-AP into N-(2-hydroxyphenyl) malonamic acid (HPMA) and 2-AMP into N-(2-hydroxy-4-methoxyphenyl) malonamic acid (HMPMA). The duplicated dienlactone hydrolases DLH1 and DLH2 may provide redundant function for hydrolyzing the lactone moiety in the BOA molecule. The roles of the amidases an other enzymes encoded by the 2 FDB clusters have not been identified so far. The protein is NmrA-like family domain-containing oxidoreductase FVEG_08287 of Gibberella moniliformis (strain M3125 / FGSC 7600) (Maize ear and stalk rot fungus).